The following is a 258-amino-acid chain: Ribosomal RNA small subunit methyltransferase J (258 aa).

Residues 111–112, 127–128, and aspartate 179 each bind S-adenosyl-L-methionine; these read RD and ER.

This sequence belongs to the methyltransferase superfamily. RsmJ family.

It localises to the cytoplasm. The enzyme catalyses guanosine(1516) in 16S rRNA + S-adenosyl-L-methionine = N(2)-methylguanosine(1516) in 16S rRNA + S-adenosyl-L-homocysteine + H(+). In terms of biological role, specifically methylates the guanosine in position 1516 of 16S rRNA. The protein is Ribosomal RNA small subunit methyltransferase J of Alteromonas mediterranea (strain DSM 17117 / CIP 110805 / LMG 28347 / Deep ecotype).